Here is a 326-residue protein sequence, read N- to C-terminus: Beta-ketoacyl-[acyl-carrier-protein] synthase III (326 aa).

Catalysis depends on residues C113 and H253. The segment at Q254–R258 is ACP-binding. N283 is a catalytic residue.

It belongs to the thiolase-like superfamily. FabH family. As to quaternary structure, homodimer.

Its subcellular location is the cytoplasm. It catalyses the reaction malonyl-[ACP] + acetyl-CoA + H(+) = 3-oxobutanoyl-[ACP] + CO2 + CoA. Its pathway is lipid metabolism; fatty acid biosynthesis. Its function is as follows. Catalyzes the condensation reaction of fatty acid synthesis by the addition to an acyl acceptor of two carbons from malonyl-ACP. Catalyzes the first condensation reaction which initiates fatty acid synthesis and may therefore play a role in governing the total rate of fatty acid production. Possesses both acetoacetyl-ACP synthase and acetyl transacylase activities. Its substrate specificity determines the biosynthesis of branched-chain and/or straight-chain of fatty acids. The chain is Beta-ketoacyl-[acyl-carrier-protein] synthase III from Wolbachia sp. subsp. Brugia malayi (strain TRS).